We begin with the raw amino-acid sequence, 36 residues long: Collagen alpha-2(I) chain (36 aa).

The interval 1–36 is disordered; it reads GSNGEPGSAGPPGPAGLRGLPGESGAVGPAGPPGSR. 4-hydroxyproline is present on residues Pro-6 and Pro-12. Residues 15–29 show a composition bias toward low complexity; it reads AGLRGLPGESGAVGP. Residue Pro-33 is modified to 4-hydroxyproline.

This sequence belongs to the fibrillar collagen family. Trimers of one alpha 2(I) and two alpha 1(I) chains. In terms of processing, proline residues at the third position of the tripeptide repeating unit (G-X-Y) are hydroxylated in some or all of the chains.

The protein resides in the secreted. It is found in the extracellular space. The protein localises to the extracellular matrix. Its function is as follows. Type I collagen is a member of group I collagen (fibrillar forming collagen). This Brachylophosaurus canadensis (Campanian hadrosaur) protein is Collagen alpha-2(I) chain.